A 500-amino-acid chain; its full sequence is Cytochrome P450 71B36 (500 aa).

The chain crosses the membrane as a helical span at residues 1–21 (MATILFLSLLFLSCILLAAFT). Cys-440 is a binding site for heme.

The protein belongs to the cytochrome P450 family. The cofactor is heme.

The protein localises to the membrane. In Arabidopsis thaliana (Mouse-ear cress), this protein is Cytochrome P450 71B36 (CYP71B36).